Here is a 365-residue protein sequence, read N- to C-terminus: Caffeic acid 3-O-methyltransferase (365 aa).

N131 serves as a coordination point for (E)-ferulate. Residues G208, D231, D251, M252, M264, and K265 each coordinate S-adenosyl-L-homocysteine. Residue H269 is the Proton acceptor of the active site. D270 contributes to the (E)-5-hydroxyferulate binding site. Active-site residues include E297 and E329.

This sequence belongs to the class I-like SAM-binding methyltransferase superfamily. Cation-independent O-methyltransferase family. COMT subfamily. As to quaternary structure, homodimer. More abundant in roots and stems.

It carries out the reaction (E)-caffeate + S-adenosyl-L-methionine = (E)-ferulate + S-adenosyl-L-homocysteine + H(+). The catalysed reaction is (E)-5-hydroxyferulate + S-adenosyl-L-methionine = (E)-sinapate + S-adenosyl-L-homocysteine + H(+). Its pathway is aromatic compound metabolism; phenylpropanoid biosynthesis. Catalyzes the conversion of caffeic acid to ferulic acid and of 5-hydroxyferulic acid to sinapic acid. The resulting products may subsequently be converted to the corresponding alcohols that are incorporated into lignins. The chain is Caffeic acid 3-O-methyltransferase from Medicago sativa (Alfalfa).